The following is a 278-amino-acid chain: uncharacterized protein (278 aa).

The segment covering 1–16 (MFGLKVKDAQKDDQKS) has biased composition (basic and acidic residues). Disordered regions lie at residues 1–86 (MFGL…RGSN) and 98–126 (FGTT…TPWL). Composition is skewed to low complexity over residues 33 to 45 (QGTS…RGSS) and 99 to 117 (GTTS…STPS).

Belongs to the adhesin P1 family.

This is an uncharacterized protein from Mycoplasma pneumoniae (strain ATCC 29342 / M129 / Subtype 1) (Mycoplasmoides pneumoniae).